Reading from the N-terminus, the 518-residue chain is GMP synthase [glutamine-hydrolyzing] (518 aa).

The region spanning 6 to 200 (RLLIIDFGSQ…FVKLAGFKGD (195 aa)) is the Glutamine amidotransferase type-1 domain. C84 functions as the Nucleophile in the catalytic mechanism. Residues H175 and E177 contribute to the active site. Residues 201–393 (WTMGAYREEA…LGLPDSFIGR (193 aa)) enclose the GMPS ATP-PPase domain. 228–234 (SGGVDSS) serves as a coordination point for ATP.

In terms of assembly, homodimer.

It catalyses the reaction XMP + L-glutamine + ATP + H2O = GMP + L-glutamate + AMP + diphosphate + 2 H(+). The protein operates within purine metabolism; GMP biosynthesis; GMP from XMP (L-Gln route): step 1/1. Functionally, catalyzes the synthesis of GMP from XMP. The chain is GMP synthase [glutamine-hydrolyzing] from Cereibacter sphaeroides (strain ATCC 17025 / ATH 2.4.3) (Rhodobacter sphaeroides).